Consider the following 248-residue polypeptide: CKLF-like MARVEL transmembrane domain-containing protein 2 (248 aa).

Residues 1–63 are disordered; it reads MAPKAAKGAK…KAVQPKHEVG (63 aa). A compositionally biased stretch (pro residues) spans 12–22; the sequence is EPAPAPPPPGA. Basic and acidic residues predominate over residues 23–63; that stretch reads KPEEDKKDGKEPSDKPQKAVQDHKEPSDKPQKAVQPKHEVG. An MARVEL domain is found at 82–204; the sequence is FWLLGHAEIK…DVCLQRNHFR (123 aa). 3 consecutive transmembrane segments (helical) span residues 116–136, 147–167, and 178–198; these read LIIT…SFAI, ISDL…VVFA, and YLLA…DVCL. Positions 208 to 248 are disordered; that stretch reads AKKHMLVPPPGKEKGPQQGKGPEPAKPPEPGKPPGPAKGKK. Residues 231-248 are compositionally biased toward pro residues; sequence PAKPPEPGKPPGPAKGKK.

The protein belongs to the chemokine-like factor family. Highly expressed in testis.

It is found in the membrane. The polypeptide is CKLF-like MARVEL transmembrane domain-containing protein 2 (CMTM2) (Homo sapiens (Human)).